Reading from the N-terminus, the 159-residue chain is Ribosomal RNA large subunit methyltransferase H (159 aa).

Residues L76, G108, and 127–132 (FSKMTF) contribute to the S-adenosyl-L-methionine site.

The protein belongs to the RNA methyltransferase RlmH family. Homodimer.

It is found in the cytoplasm. The catalysed reaction is pseudouridine(1915) in 23S rRNA + S-adenosyl-L-methionine = N(3)-methylpseudouridine(1915) in 23S rRNA + S-adenosyl-L-homocysteine + H(+). Specifically methylates the pseudouridine at position 1915 (m3Psi1915) in 23S rRNA. The chain is Ribosomal RNA large subunit methyltransferase H from Geobacillus sp. (strain WCH70).